A 299-amino-acid polypeptide reads, in one-letter code: Protein PRY1 (299 aa).

The first 19 residues, 1 to 19, serve as a signal peptide directing secretion; it reads MKLSKLSILTSALATSALA. The segment at 103 to 157 is disordered; it reads TDSTTTLTSSESTSQSLAQATTTSTPAAASTTSTPAATTTTSQAAATSSASSSDS. Residues 167–281 enclose the SCP domain; that stretch reads LAEHNKKRAL…AWGDYVICSY (115 aa).

The protein belongs to the CRISP family. Post-translationally, O-glycosylated.

It is found in the secreted. In terms of biological role, secreted protein required for efficient export of lipids such as acetylated sterols. Acts in detoxification of hydrophobic compounds. This Saccharomyces cerevisiae (strain ATCC 204508 / S288c) (Baker's yeast) protein is Protein PRY1.